A 736-amino-acid polypeptide reads, in one-letter code: MPLNRTLSMSSLPGLEDWEDEFDLENTVLFEVAWEVANKVGGIYTVLQTKAKVTGDEWGDNYYLVGPYTEQGVRTQVELLEPPTPALKRTLDSMNSKGCKVYFGRWLIEGGPLVVLLDVGASAWALERWKGELWDTCNIGVPWYDREANDAVLFGFLTTWFLGEFLAQSEEKPHVVAHFHEWLAGVGLCLCRARRLPVATIFTTHATLLGRYLCAGAVDFYNNLENFNVDKEAGERQIYHRYCMERAAAHCAHVFTTVSQITAIEAQHLLKRKPDIVTPNGLNVKKFSAMHEFQNLHAQSKARIQEFVRGHFYGHLDFNLDKTLYFFIAGRYEFSNKGADVFLEALARLNYLLRVNGSEQTVVAFFIMPARTNNFNVETLKGQAVRKQLWDTANTVKEKFGRKLYESLLVGSLPDMNKMLDKEDFTMMKRAIFATQRQSFPPVCTHNMLDDSSDPILTTIRRIGLFNSSADRVKVIFHPEFLSSTSPLLPVDYEEFVRGCHLGVFPSYYEPWGYTPAECTVMGIPSVSTNLSGFGCFMEEHIADPSAYGIYILDRRFRSLDDSCSQLTSFLYSFCQQSRRQRIIQRNRTERLSDLLDWKYLGRYYMSARHMALAKAFPEYFTYEPHEADATQGYRYPRPASVPPSPSLSRHSSPHQSEDEEEPRDLPPDEDDERYDEDEEAAKDRRNIRAPEWPRRASCTSSTGSKRGSVDTAPSSSVSTPSEPLSPASSLGEERN.

Position 8 is a phosphoserine; by AMPK and PKA (Ser-8). The residue at position 11 (Ser-11) is a Phosphoserine. Position 39 (Lys-39) interacts with UDP. The UDP-alpha-D-glucose site is built by His-205 and Arg-211. Alpha-D-glucose 6-phosphate contacts are provided by His-291, Glu-292, Gln-294, His-297, and Lys-301. Residue Arg-331 participates in UDP binding. Arg-331 is a UDP-alpha-D-glucose binding site. Ser-412 carries the post-translational modification Phosphoserine. His-501 is an alpha-D-glucose 6-phosphate binding site. Residues Glu-510, Trp-512, and Gly-513 each coordinate UDP-alpha-D-glucose. Thr-515 provides a ligand contact to UDP. Alpha-D-glucose 6-phosphate is bound by residues Arg-582 and Arg-586. Residues 631–736 are disordered; sequence TQGYRYPRPA…PASSLGEERN (106 aa). Ser-641 is subject to Phosphoserine; by DYRK2, GSK3-alpha, GSK3-beta and PASK. Ser-645 and Ser-649 each carry phosphoserine; by GSK3-alpha and GSK3-beta. Ser-652 bears the Phosphoserine mark. Residue Ser-653 is modified to Phosphoserine; by GSK3-alpha and GSK3-beta. Ser-657 is subject to Phosphoserine; by CK2. A compositionally biased stretch (acidic residues) spans 658 to 681; it reads EDEEEPRDLPPDEDDERYDEDEEA. A compositionally biased stretch (basic and acidic residues) spans 682–695; that stretch reads AKDRRNIRAPEWPR. A Phosphoserine modification is found at Ser-698. A Phosphothreonine modification is found at Thr-700. Ser-709 carries the phosphoserine modification. Residues 714–727 show a composition bias toward low complexity; that stretch reads PSSSVSTPSEPLSP. Thr-720 carries the post-translational modification Phosphothreonine. 2 positions are modified to phosphoserine: Ser-726 and Ser-730.

The protein belongs to the glycosyltransferase 3 family. Part of the GYS1-GYG1 complex, a heterooctamer composed of a tetramer of GYS1 and 2 dimers of GYG1, where each GYS1 protomer binds to one GYG1 subunit (via GYG1 C-terminus); the GYS1 tetramer may dissociate from GYG1 dimers to continue glycogen polymerization on its own. Phosphorylation at Ser-8 by AMPK inactivates the enzyme activity. Primed phosphorylation at Ser-657 (site 5) by CSNK2A1 and CSNK2A2 is required for inhibitory phosphorylation at Ser-641 (site 3a), Ser-645 (site 3b), Ser-649 (site 3c) and Ser-653 (site 4) by GSK3A an GSK3B. Phosphorylated at Ser-641 by PASK, leading to inactivation; phosphorylation by PASK is inhibited by glycogen. Phosphorylated at Ser-641 by DYRK2, leading to inactivation. Dephosphorylation at Ser-641 and Ser-645 by PP1 activates the enzyme.

It catalyses the reaction [(1-&gt;4)-alpha-D-glucosyl](n) + UDP-alpha-D-glucose = [(1-&gt;4)-alpha-D-glucosyl](n+1) + UDP + H(+). It participates in glycan biosynthesis; glycogen biosynthesis. Its activity is regulated as follows. Allosteric activation by glucose-6-phosphate. Phosphorylation reduces the activity towards UDP-glucose. When in the non-phosphorylated state, glycogen synthase does not require glucose-6-phosphate as an allosteric activator; when phosphorylated it does. Glycogen synthase participates in the glycogen biosynthetic process along with glycogenin and glycogen branching enzyme. Extends the primer composed of a few glucose units formed by glycogenin by adding new glucose units to it. In this context, glycogen synthase transfers the glycosyl residue from UDP-Glc to the non-reducing end of alpha-1,4-glucan. This chain is Glycogen [starch] synthase, muscle (GYS1), found in Bos taurus (Bovine).